Reading from the N-terminus, the 586-residue chain is Exocyst complex component EXO70A3 (586 aa).

N-linked (GlcNAc...) asparagine glycans are attached at residues Asn-65 and Asn-106. The disordered stretch occupies residues 119 to 149 (CLPSNLRPPSDDEGSDGKSHDPQSNGLGKTD). The chain crosses the membrane as a helical span at residues 258-278 (FAEITTISFGMLLSFGYAIAI). Asn-321 and Asn-487 each carry an N-linked (GlcNAc...) asparagine glycan.

Belongs to the EXO70 family. As to quaternary structure, subunit of the exocyst complex. In terms of tissue distribution, confined to the outer layer of the columella cells in the root tips of young seedlings.

Its subcellular location is the membrane. Its function is as follows. Component of the exocyst complex involved in the docking of exocytic vesicles with fusion sites on the plasma membrane during regulated or polarized secretion. Involved in PIN4 exocytosis and gravitropic responses in columella cells. By monitoring PIN4 distribution in columella cells, modulates auxin repartition and subsequently regulates the root system architecture (RSA), thus being a component of the auxin-dependent root directional growth (ARD). The protein is Exocyst complex component EXO70A3 of Arabidopsis thaliana (Mouse-ear cress).